Here is a 218-residue protein sequence, read N- to C-terminus: UPF0502 protein VS_II0353 (218 aa).

It belongs to the UPF0502 family.

This is UPF0502 protein VS_II0353 from Vibrio atlanticus (strain LGP32) (Vibrio splendidus (strain Mel32)).